Consider the following 356-residue polypeptide: Viral cathepsin (356 aa).

Residues 1–40 (MYANALVCLNPSFIKLQFHIVCTMNIIGIVTLALCSAASA) form the signal peptide. A propeptide spans 41–144 (ADEGAAYNLQ…IILNQPPDKG (104 aa)) (activation peptide). Cystine bridges form between Cys165/Cys206, Cys199/Cys239, and Cys295/Cys343. Cys168 is an active-site residue. Catalysis depends on residues His302 and Asn322.

It belongs to the peptidase C1 family. Post-translationally, synthesized as an inactive proenzyme and activated by proteolytic removal of the inhibitory propeptide.

The catalysed reaction is Endopeptidase of broad specificity, hydrolyzing substrates of both cathepsin L and cathepsin B.. Functionally, cysteine protease that plays an essential role in host liquefaction to facilitate horizontal transmission of the virus. May participate in the degradation of foreign protein expressed by the baculovirus system. The polypeptide is Viral cathepsin (VCATH) (Lepidoptera (butterflies and moths)).